A 751-amino-acid polypeptide reads, in one-letter code: 1,3-beta-galactosyl-N-acetylhexosamine phosphorylase (751 aa).

The Proton donor role is filled by aspartate 313.

The protein belongs to the glycoside hydrolase 112 family. In terms of assembly, homodimer.

It catalyses the reaction beta-D-galactosyl-(1-&gt;3)-N-acetyl-D-glucosamine + phosphate = alpha-D-galactose 1-phosphate + N-acetyl-D-glucosamine. Functionally, reversibly phosphorolyzes lacto-N-biose to Gal1-P and N-acetylglucosamine (GlcNAc) and galacto-N-biose to Gal1-P and N-acetylgalactosamine (GalNAc). Involved in the lacto-N-biose I/galacto-N-biose (LNB/GNB) degradation pathway, which is important for host intestinal colonization by bifidobacteria. The protein is 1,3-beta-galactosyl-N-acetylhexosamine phosphorylase (lnpA) of Bifidobacterium longum subsp. longum (strain ATCC 15707 / DSM 20219 / JCM 1217 / NCTC 11818 / E194b).